The primary structure comprises 541 residues: FAD-linked oxidoreductase pynB (541 aa).

A signal peptide spans M1–A20. N30, N57, N117, N131, N158, N253, N306, N343, N430, and N461 each carry an N-linked (GlcNAc...) asparagine glycan. The FAD-binding PCMH-type domain occupies F71–F242.

Belongs to the oxygen-dependent FAD-linked oxidoreductase family. Requires FAD as cofactor.

It participates in secondary metabolite biosynthesis. FAD-linked oxidoreductase; part of the gene cluster that mediates the biosynthesis of pyranonigrins, a family of antioxidative compounds. The first step of pyranonigrins biosynthesis is performed by the hybrid PKS-NRPS synthetase that condenses 6 malonyl-CoA units to an acetyl starter unit, to form a 1,3,5-trioxotetradecane-6,8-dienyl-ACP. The enoyl reductase (ER) domain of pynA is likely to be functional during the first two rounds of polyketide chain extension, to generate the saturated C-C bonds of the alkyl side chain. PynA subsequently forms the amide bond between the acyl chain and L-serine. Although pynA has a terminal reductase domain, it appears to require the thioesterase pynI for the release of the straight-chain intermediate from pynA via the formation of a tetramic acid pyranonigrin J. The methyltransferase pynC then coverts pyranonigrin J to pyranonigrin I via N-methylation. The FAD-dependent monooxygenase pynG catalyzes an epoxidation-mediated cyclization to form the dihydro-gamma-pyrone moiety, followed by pynD-catalyzed oxidation of the alcohol to the ketone and enolization to yield the characteristic tetramic acid-fused gamma-pyrone core of pyranonigrin H. Pyranonigrin H is substrate of pynH for dehydration-mediated exo-methylene formation from the serine side chain to produce pyranonigrin E, before the oxidase pynE reduces the exo-methylene of pyranonigrin E into a pendant methyl to form pyranonigrin G. The FAD-linked oxidoreductase pynB performs the reverse reaction and converts pyranonigrin G back to pyranonigrin E. The protein is FAD-linked oxidoreductase pynB of Aspergillus niger (strain ATCC MYA-4892 / CBS 513.88 / FGSC A1513).